The sequence spans 316 residues: Probable cell division protein WhiA (316 aa).

The H-T-H motif DNA-binding region spans 277–310 (SLEQLGRLADPPITKDAIAGRIRRLLQLAEKTEK).

It belongs to the WhiA family.

Functionally, involved in cell division and chromosome segregation. This is Probable cell division protein WhiA from Bifidobacterium adolescentis (strain ATCC 15703 / DSM 20083 / NCTC 11814 / E194a).